A 339-amino-acid polypeptide reads, in one-letter code: Starvation-sensing protein RspB (339 aa).

Residues C37, H59, C89, C92, C95, C103, and E144 each contribute to the Zn(2+) site.

The protein belongs to the zinc-containing alcohol dehydrogenase family. The cofactor is Zn(2+).

Functionally, not known; probable catabolic enzyme. The polypeptide is Starvation-sensing protein RspB (Escherichia coli (strain K12)).